Consider the following 353-residue polypeptide: MESAIGEHLQCPRTLTRRVPDTYTPPFPMWVGRADDALQQVVMGYLGVQFRDEDQRPAALQAMRDIVAGFDLPDGPAHHDLTHHIDNQGYENLIVVGYWKDVSSQHRWSTSTPIASWWESEDRLSDGLGFFREIVAPRAEQFETLYAFQEDLPGVGAVMDGISGEINEHGYWGSMRERFPISQTDWMQASGELRVIAGDPAVGGRVVVRGHDNIALIRSGQDWADAEADERSLYLDEILPTLQSGMDFLRDNGPAVGCYSNRFVRNIDIDGNFLDLSYNIGHWASLDQLERWSESHPTHLRIFTTFFRVAAGLSKLRLYHEVSVFDAADQLYEYINCHPGTGMLRDAVTIAEH.

S219 provides a ligand contact to an aliphatic aldoxime. Residue H299 coordinates heme b. H320 contributes to the an aliphatic aldoxime binding site. Residue H320 is part of the active site.

Belongs to the heme-containing dehydratase family. In terms of assembly, homodimer. Heme b serves as cofactor.

It catalyses the reaction an aliphatic aldoxime = a nitrile + H2O. With respect to regulation, active when the heme iron is in the ferrous state. The activity is enhanced by reducing agents, such as Na(2)S, Na(2)S(2)(O4), 2-mercaptoethanol, and L-cysteine and supplementary additions of electron acceptors such as flavins, sulfite ion, and vitamin K3. The effect of various chemicals on the enzyme activity is different in the presence and absence of the reducing reagent, Na(2)S, which acts not only as a reductant but also changes the substrate specificity of the enzyme. In terms of biological role, catalyzes the dehydration of aldoximes to their corresponding nitrile. Is active toward various arylalkyl- and alkyl-aldoximes, and to a lesser extent toward aryl-aldoximes. This Rhodococcus erythropolis (Arthrobacter picolinophilus) protein is Aliphatic aldoxime dehydratase.